A 1210-amino-acid chain; its full sequence is Homeodomain-interacting protein kinase 1 (1210 aa).

A Glycyl lysine isopeptide (Lys-Gly) (interchain with G-Cter in SUMO); alternate cross-link involves residue lysine 25. Lysine 25 is covalently cross-linked (Glycyl lysine isopeptide (Lys-Gly) (interchain with G-Cter in SUMO2); alternate). Residues lysine 120 and lysine 124 each participate in a glycyl lysine isopeptide (Lys-Gly) (interchain with G-Cter in SUMO2) cross-link. A Protein kinase domain is found at 190–518; sequence YEVLEFLGRG…PLKTLNHQFV (329 aa). Residues 196 to 204 and lysine 219 contribute to the ATP site; that span reads LGRGTFGQV. Aspartate 315 functions as the Proton acceptor in the catalytic mechanism. Positions 835–856 are disordered; that stretch reads QQQSSSLPSKKNKQSAPVSSKS. The Nuclear localization signal 1 (NLS1) motif lies at 844 to 847; it reads KKNK. Serine 872 is modified (phosphoserine). The segment at 885–1093 is interaction with TP53; sequence PVQDQHQPII…FQHGSPLHST (209 aa). Residues 891–998 form a required for localization to nuclear speckles region; the sequence is QPIIIPDTPS…PLKTQLGDCT (108 aa). Residues 902–926 are SUMO interaction motifs (SIM); required for nuclear localization and kinase activity; sequence PVSVITIRSDTDEEEDNKYKPNSSS. Positions 938 to 981 are disordered; sequence TVNDSPDSDSSLSSPHPTDTLSALRGNSGTLLEGPGRPAADGIG. A compositionally biased stretch (low complexity) spans 941-959; that stretch reads DSPDSDSSLSSPHPTDTLS. Lysine 991 participates in a covalent cross-link: Glycyl lysine isopeptide (Lys-Gly) (interchain with G-Cter in SUMO2). Disordered regions lie at residues 1046-1069 and 1084-1104; these read LSQN…APRR and FQHG…APAH. 2 stretches are compositionally biased toward low complexity: residues 1047–1063 and 1095–1104; these read SQNQ…ERSS and HPHLAPAPAH. Residue serine 1200 is modified to Phosphoserine. Lysine 1203 is covalently cross-linked (Glycyl lysine isopeptide (Lys-Gly) (interchain with G-Cter in SUMO)).

Belongs to the protein kinase superfamily. CMGC Ser/Thr protein kinase family. HIPK subfamily. In terms of assembly, interacts with Nkx1-2, Nkx2-5, MYB, PARK7, DAXX and p53/TP53. Part of a cytoplasmic complex made of HIPK1, DAB2IP and MAP3K5 in response to TNF. This complex formation promotes MAP3K5-JNK activation and subsequent apoptosis. Post-translationally, phosphorylated and activated by JNK1. Autophosphorylated. Sumoylated. When conjugated it is directed to nuclear speckles. SENP1-mediated desumoylation is mediated by TNF in response to stress stimuli, triggering transient translocation from nucleus to cytoplasm. In terms of tissue distribution, ubiquitously expressed, with high levels in reproductive tissues. Expressed in the epithelial layer of mammary gland, uterus and epididymis, in the corpus luteum, and in post-meiotic round spermatids.

It is found in the nucleus. The protein localises to the cytoplasm. It localises to the nucleus speckle. It catalyses the reaction L-seryl-[protein] + ATP = O-phospho-L-seryl-[protein] + ADP + H(+). The enzyme catalyses L-threonyl-[protein] + ATP = O-phospho-L-threonyl-[protein] + ADP + H(+). Functionally, serine/threonine-protein kinase involved in transcription regulation and TNF-mediated cellular apoptosis. Plays a role as a corepressor for homeodomain transcription factors. Phosphorylates DAXX and MYB. Phosphorylates DAXX in response to stress, and mediates its translocation from the nucleus to the cytoplasm. Inactivates MYB transcription factor activity by phosphorylation. Prevents MAP3K5-JNK activation in the absence of TNF. TNF triggers its translocation to the cytoplasm in response to stress stimuli, thus activating nuclear MAP3K5-JNK by derepression and promoting apoptosis. May be involved in anti-oxidative stress responses. Involved in the regulation of eye size, lens formation and retinal lamination during late embryogenesis. Promotes angiogenesis and to be involved in erythroid differentiation. May be involved in malignant squamous cell tumor formation. Phosphorylates PAGE4 at 'Thr-51' which is critical for the ability of PAGE4 to potentiate the transcriptional activator activity of JUN. The protein is Homeodomain-interacting protein kinase 1 (Hipk1) of Mus musculus (Mouse).